Here is a 689-residue protein sequence, read N- to C-terminus: Transcription factor BHLH42 (689 aa).

Disordered regions lie at residues 192-287 and 458-489; these read IDHH…NPRV and DDNNSPKSATAADSASRFRKPTPQDELSANHV. The span at 206-217 shows a compositional bias: polar residues; the sequence is EHSTSNLATSSV. The span at 246 to 271 shows a compositional bias: acidic residues; the sequence is EEQEQEQEEDEDDDDDDDDEEEAESD. Residues 483-496 are basic motif; that stretch reads ELSANHVLAERRRR. Positions 483-532 constitute a bHLH domain; sequence ELSANHVLAERRRREKLNERFIILRSLVPFVTKMDKASILGDTIEYVKQL. A helix-loop-helix motif region spans residues 497–532; that stretch reads EKLNERFIILRSLVPFVTKMDKASILGDTIEYVKQL. Residues 547 to 570 are disordered; sequence EIDQRSRSSGDPQRSGAKAATDKR.

It belongs to the bHLH protein family. As to quaternary structure, interacts with MYB123. In terms of tissue distribution, expressed in the inner pericarp of maturing fruits.

The protein resides in the nucleus. In terms of biological role, transcription activator involved in the spatiotemporal regulation of anthocyanin biosynthesis specifically in the inner pericarp of red-fleshed kiwifruits. Functions in association with MYB123 to activate the promoters of LDOX (ANS) and F3GT1 that encode the dedicated enzymes for anthocyanin biosynthesis. The sequence is that of Transcription factor BHLH42 from Actinidia chinensis var. chinensis (Chinese soft-hair kiwi).